Here is a 600-residue protein sequence, read N- to C-terminus: MPEIRVTPLGAGQDVGRSCILVSIAGKNVMLDCGMHMGFNDDRRFPDFSYITQNGRLTDFLDCVIISHFHLDHCGALPYFSEMVGYDGPIYMTHPTQAICPILLEDYRKIAVDKKGEANFFTSQMIKDCMKKVVAVHLHQTVQVDDELEIKAYYAGHVLGAAMFQIKVGSESVVYTGDYNMTPDRHLGAAWIDKCRPNLLITESTYATTIRDSKRCRERDFLKKVHETVERGGKVLIPVFALGRAQELCILLETFWERMNLKVPIYFSTGLTEKANHYYKLFIPWTNQKIRKTFVQRNMFEFKHIKAFDRAFADNPGPMVVFATPGMLHAGQSLQIFRKWAGNEKNMVIMPGYCVQGTVGHKILSGQRKLEMEGRQVLEVKMQVEYMSFSAHADAKGIMQLVGQAEPESVLLVHGEAKKMEFLKQKIEQELRVSCYMPANGETVTLPTSPSIPVGISLGLLKREMAQGLLPEAKKPRLLHGTLIMKDSNFRLVSSEQALKELGLAEHQLRFTCRVHLHDTRKEQETALRVYSHLKSILKDHCVQHLPDGSVTVESILIQAAAPSEDPGTKVLLVSWTYQDEELGSFLTSLLKKGLPQAPS.

The Zn(2+) site is built by H68, H70, D72, H73, H157, and D178. The HXHXDH motif motif lies at 68–73; sequence HFHLDH. Residue E203 is part of the active site. A Glycyl lysine isopeptide (Lys-Gly) (interchain with G-Cter in SUMO) cross-link involves residue K381. H414 contacts Zn(2+). Residues K462 and K475 each participate in a glycyl lysine isopeptide (Lys-Gly) (interchain with G-Cter in SUMO) cross-link. The short motif at 469–479 is the Nuclear localization signal element; the sequence is LLPEAKKPRLL.

Belongs to the metallo-beta-lactamase superfamily. RNA-metabolizing metallo-beta-lactamase-like family. INTS11 subfamily. Component of the Integrator complex, composed of core subunits INTS1, INTS2, INTS3, INTS4, INTS5, INTS6, INTS7, INTS8, INTS9/RC74, INTS10, INTS11/CPSF3L, INTS12, INTS13, INTS14 and INTS15. The core complex associates with protein phosphatase 2A subunits PPP2CA and PPP2R1A, to form the Integrator-PP2A (INTAC) complex. INTS11 is part of the RNA endonuclease subcomplex, composed of INTS4, INTS9, INTS11 and inositol hexakisphosphate (InsP6). Interacts with WDR73; interaction is required for the assembly of the RNA endonuclease subcomplex in the cytoplasm. Interacts with BRAT1; interaction is required for the assembly of the RNA endonuclease subcomplex and inhibits the endonuclease activity of INTS11 before formation of mature integrator complex. Zn(2+) serves as cofactor. Sumoylated; sumoylation regulates its subcellular location and is required for integrator complex integrity.

Its subcellular location is the nucleus. The protein localises to the cytoplasm. With respect to regulation, the RNA endonuclease activity is inhibited by BRAT1 that forms hyrogen bond and hydrophobic interactions with the active site. RNA endonuclease component of the integrator complex, a multiprotein complex that terminates RNA polymerase II (Pol II) transcription in the promoter-proximal region of genes. The integrator complex provides a quality checkpoint during transcription elongation by driving premature transcription termination of transcripts that are unfavorably configured for transcriptional elongation: the complex terminates transcription by (1) catalyzing dephosphorylation of the C-terminal domain (CTD) of Pol II subunit POLR2A/RPB1 and SUPT5H/SPT5, (2) degrading the exiting nascent RNA transcript via endonuclease activity and (3) promoting the release of Pol II from bound DNA. The integrator complex is also involved in terminating the synthesis of non-coding Pol II transcripts, such as enhancer RNAs (eRNAs), small nuclear RNAs (snRNAs), telomerase RNAs and long non-coding RNAs (lncRNAs). Within the integrator complex, INTS11 constitutes the RNA endonuclease subunit that degrades exiting nascent RNA transcripts. Mediates recruitment of cytoplasmic dynein to the nuclear envelope, probably as component of the integrator complex. The protein is Integrator complex subunit 11 (INTS11) of Pongo abelii (Sumatran orangutan).